We begin with the raw amino-acid sequence, 103 residues long: uncharacterized protein (103 aa).

This is an uncharacterized protein from Shigella flexneri.